Consider the following 488-residue polypeptide: Regulatory protein ViaA (488 aa).

The protein belongs to the ViaA family. Homodimer. Interacts with RavA.

It is found in the cytoplasm. Its function is as follows. Component of the RavA-ViaA chaperone complex, which may act on the membrane to optimize the function of some of the respiratory chains. ViaA stimulates the ATPase activity of RavA. The protein is Regulatory protein ViaA of Yersinia pseudotuberculosis serotype O:1b (strain IP 31758).